A 355-amino-acid chain; its full sequence is Ferrochelatase (355 aa).

Positions 214 and 295 each coordinate Fe cation.

This sequence belongs to the ferrochelatase family.

It is found in the cytoplasm. The enzyme catalyses heme b + 2 H(+) = protoporphyrin IX + Fe(2+). The protein operates within porphyrin-containing compound metabolism; protoheme biosynthesis; protoheme from protoporphyrin-IX: step 1/1. Functionally, catalyzes the ferrous insertion into protoporphyrin IX. In Burkholderia thailandensis (strain ATCC 700388 / DSM 13276 / CCUG 48851 / CIP 106301 / E264), this protein is Ferrochelatase.